The primary structure comprises 232 residues: Large ribosomal subunit protein uL1 (232 aa).

This sequence belongs to the universal ribosomal protein uL1 family. In terms of assembly, part of the 50S ribosomal subunit.

Its function is as follows. Binds directly to 23S rRNA. The L1 stalk is quite mobile in the ribosome, and is involved in E site tRNA release. Functionally, protein L1 is also a translational repressor protein, it controls the translation of the L11 operon by binding to its mRNA. The polypeptide is Large ribosomal subunit protein uL1 (Chlamydia abortus (strain DSM 27085 / S26/3) (Chlamydophila abortus)).